The sequence spans 178 residues: Large ribosomal subunit protein uL13m (178 aa).

The protein belongs to the universal ribosomal protein uL13 family. As to quaternary structure, component of the mitochondrial ribosome large subunit (39S) which comprises a 16S rRNA and about 50 distinct proteins. Interacts with OXA1L.

It is found in the mitochondrion. This is Large ribosomal subunit protein uL13m (MRPL13) from Bos taurus (Bovine).